The following is a 62-amino-acid chain: Weak neurotoxin 5 (62 aa).

Intrachain disulfides connect cysteine 3/cysteine 24, cysteine 6/cysteine 11, cysteine 17/cysteine 40, cysteine 44/cysteine 54, and cysteine 55/cysteine 60.

This sequence belongs to the three-finger toxin family. Ancestral subfamily. Orphan group II sub-subfamily. As to expression, expressed by the venom gland.

It is found in the secreted. Its function is as follows. Binds with low affinity to muscular (alpha-1-beta-1-delta-epsilon/CHRNA1-CHRNB1-CHRND-CHRNE) and very low affinity to neuronal (alpha-7/CHRNA7) nicotinic acetylcholine receptor (nAChR). The sequence is that of Weak neurotoxin 5 from Naja naja (Indian cobra).